The primary structure comprises 401 residues: Probable tRNA sulfurtransferase (401 aa).

In terms of domain architecture, THUMP spans 60 to 165; the sequence is EALFPHLKQV…EEATFLTIRD (106 aa). Residues 183–184, 208–209, Arg-265, Gly-287, and Gln-296 each bind ATP; these read ML and HF.

It belongs to the ThiI family.

It is found in the cytoplasm. The enzyme catalyses [ThiI sulfur-carrier protein]-S-sulfanyl-L-cysteine + a uridine in tRNA + 2 reduced [2Fe-2S]-[ferredoxin] + ATP + H(+) = [ThiI sulfur-carrier protein]-L-cysteine + a 4-thiouridine in tRNA + 2 oxidized [2Fe-2S]-[ferredoxin] + AMP + diphosphate. It catalyses the reaction [ThiS sulfur-carrier protein]-C-terminal Gly-Gly-AMP + S-sulfanyl-L-cysteinyl-[cysteine desulfurase] + AH2 = [ThiS sulfur-carrier protein]-C-terminal-Gly-aminoethanethioate + L-cysteinyl-[cysteine desulfurase] + A + AMP + 2 H(+). Its pathway is cofactor biosynthesis; thiamine diphosphate biosynthesis. Its function is as follows. Catalyzes the ATP-dependent transfer of a sulfur to tRNA to produce 4-thiouridine in position 8 of tRNAs, which functions as a near-UV photosensor. Also catalyzes the transfer of sulfur to the sulfur carrier protein ThiS, forming ThiS-thiocarboxylate. This is a step in the synthesis of thiazole, in the thiamine biosynthesis pathway. The sulfur is donated as persulfide by IscS. In Bacillus subtilis (strain 168), this protein is Probable tRNA sulfurtransferase.